A 289-amino-acid polypeptide reads, in one-letter code: Homoserine kinase (289 aa).

ATP is bound at residue 79 to 89; the sequence is PLARGLGSSSS.

It belongs to the GHMP kinase family. Homoserine kinase subfamily.

The protein resides in the cytoplasm. The catalysed reaction is L-homoserine + ATP = O-phospho-L-homoserine + ADP + H(+). Its pathway is amino-acid biosynthesis; L-threonine biosynthesis; L-threonine from L-aspartate: step 4/5. Functionally, catalyzes the ATP-dependent phosphorylation of L-homoserine to L-homoserine phosphate. In Streptococcus pneumoniae (strain Taiwan19F-14), this protein is Homoserine kinase.